Here is a 162-residue protein sequence, read N- to C-terminus: Phosphopantetheine adenylyltransferase (162 aa).

A substrate-binding site is contributed by Thr9. ATP-binding positions include 9-10 (TF) and His17. Lys41, Leu73, and Arg87 together coordinate substrate. Residues 88-90 (GLR), Glu98, and 123-129 (FAFLSST) contribute to the ATP site.

The protein belongs to the bacterial CoaD family. Homohexamer. Mg(2+) serves as cofactor.

It is found in the cytoplasm. The catalysed reaction is (R)-4'-phosphopantetheine + ATP + H(+) = 3'-dephospho-CoA + diphosphate. It participates in cofactor biosynthesis; coenzyme A biosynthesis; CoA from (R)-pantothenate: step 4/5. Reversibly transfers an adenylyl group from ATP to 4'-phosphopantetheine, yielding dephospho-CoA (dPCoA) and pyrophosphate. This is Phosphopantetheine adenylyltransferase from Vibrio atlanticus (strain LGP32) (Vibrio splendidus (strain Mel32)).